Reading from the N-terminus, the 134-residue chain is MNPLVYFSSSSENTHRFVEKLSLPAMRIPIAGARSKLLMETPYILIVPSYGGGSAVGAVPIQVIRFLNDPQNRAFLRGVIAAGNTNFGAAYGIAGDIIAKKCQVPFLYRFELLGTTQDVANVRQGVTAFWQRQN.

Belongs to the NrdI family.

Its function is as follows. Probably involved in ribonucleotide reductase function. This chain is Protein NrdI, found in Serratia proteamaculans (strain 568).